We begin with the raw amino-acid sequence, 132 residues long: Protein NrdI (132 aa).

Belongs to the NrdI family.

In terms of biological role, probably involved in ribonucleotide reductase function. The polypeptide is Protein NrdI (Bartonella tribocorum (strain CIP 105476 / IBS 506)).